The primary structure comprises 142 residues: Universal stress protein G (142 aa).

This sequence belongs to the universal stress protein A family.

The chain is Universal stress protein G (uspG) from Salmonella typhi.